We begin with the raw amino-acid sequence, 447 residues long: Ribosomal protein uS12 methylthiotransferase RimO (447 aa).

Residues Pro-4 to Pro-114 form the MTTase N-terminal domain. The [4Fe-4S] cluster site is built by Cys-13, Cys-49, Cys-78, Cys-147, Cys-151, and Cys-154. The Radical SAM core domain maps to Leu-133–Ala-370. The TRAM domain occupies Gln-373 to Lys-443.

It belongs to the methylthiotransferase family. RimO subfamily. Requires [4Fe-4S] cluster as cofactor.

It localises to the cytoplasm. It catalyses the reaction L-aspartate(89)-[ribosomal protein uS12]-hydrogen + (sulfur carrier)-SH + AH2 + 2 S-adenosyl-L-methionine = 3-methylsulfanyl-L-aspartate(89)-[ribosomal protein uS12]-hydrogen + (sulfur carrier)-H + 5'-deoxyadenosine + L-methionine + A + S-adenosyl-L-homocysteine + 2 H(+). Functionally, catalyzes the methylthiolation of an aspartic acid residue of ribosomal protein uS12. This is Ribosomal protein uS12 methylthiotransferase RimO from Acinetobacter baumannii (strain AB0057).